A 67-amino-acid polypeptide reads, in one-letter code: Prokaryotic ubiquitin-like protein Pup (67 aa).

Residues 1-11 (MAGQEQQQPQS) are compositionally biased toward low complexity. The interval 1-47 (MAGQEQQQPQSRESEFEDDAPATPPAPGEAQASAATQGVDDLLDEID) is disordered. Residues 25 to 61 (PAPGEAQASAATQGVDDLLDEIDGVLESNAEEFVRAF) form an ARC ATPase binding region. Q67 is subject to Deamidated glutamine. Q67 participates in a covalent cross-link: Isoglutamyl lysine isopeptide (Gln-Lys) (interchain with K-? in acceptor proteins).

This sequence belongs to the prokaryotic ubiquitin-like protein family. In terms of assembly, strongly interacts with the proteasome-associated ATPase ARC through a hydrophobic interface; the interacting region of Pup lies in its C-terminal half. There is one Pup binding site per ARC hexamer ring. Post-translationally, is modified by deamidation of its C-terminal glutamine to glutamate by the deamidase Dop, a prerequisite to the subsequent pupylation process.

Its pathway is protein degradation; proteasomal Pup-dependent pathway. Functionally, protein modifier that is covalently attached to lysine residues of substrate proteins, thereby targeting them for proteasomal degradation. The tagging system is termed pupylation. The polypeptide is Prokaryotic ubiquitin-like protein Pup (Arthrobacter sp. (strain FB24)).